We begin with the raw amino-acid sequence, 579 residues long: Putative laccase-9 (579 aa).

The N-terminal stretch at 1 to 27 (MGTAKLPALLWLLAGVVLALAVNPAHG) is a signal peptide. 2 Plastocyanin-like domains span residues 36-152 (FITE…PKRG) and 162-319 (KEIP…YTDS). Residues N41 and N82 are each glycosylated (N-linked (GlcNAc...) asparagine). The Cu cation site is built by H86 and H88. N114 is a glycosylation site (N-linked (GlcNAc...) asparagine). Cu cation-binding residues include H131 and H133. 3 N-linked (GlcNAc...) asparagine glycosylation sites follow: N307, N405, and N446. Residues 436-563 (PTAFVDPPVN…DTVFIVKDGK (128 aa)) enclose the Plastocyanin-like 3 domain. Residues H480, H483, and H485 each coordinate Cu cation. N-linked (GlcNAc...) asparagine glycosylation is present at N496. Residues H542, C543, H544, H548, and M553 each coordinate Cu cation.

Belongs to the multicopper oxidase family. Cu cation is required as a cofactor.

It is found in the secreted. It localises to the extracellular space. Its subcellular location is the apoplast. It catalyses the reaction 4 hydroquinone + O2 = 4 benzosemiquinone + 2 H2O. Functionally, lignin degradation and detoxification of lignin-derived products. In Oryza sativa subsp. japonica (Rice), this protein is Putative laccase-9 (LAC9).